The following is a 669-amino-acid chain: Protein fem-1 homolog A (669 aa).

ANK repeat units follow at residues Asp2–Leu31, Gly40–Ala70, Glu82–Arg111, Thr115–Val145, His149–Arg178, Lys182–Arg211, and Tyr214–Gln243. Residue Ser108 is modified to Phosphoserine. The segment at Gly240–Glu278 is disordered. 2 TPR repeats span residues Val298–Gly332 and Ser390–Asn423. 2 ANK repeats span residues Asn534–Ser576 and Asp580–Ala609.

Belongs to the fem-1 family. Component of a CRL2 E3 ubiquitin-protein ligase complex, also named ECS (Elongin BC-CUL2/5-SOCS-box protein) complex, composed of CUL2, Elongin BC (ELOB and ELOC), RBX1 and substrate-specific adapter FEM1A. Interacts with PTGER4. Interacts with NFKB1; the interaction is direct. Phosphorylated; highly phosphorylated in myoblasts and myotubes. Phosphorylation at Ser-108 promotes PGE2-EP4-mediated inhibition of inflammation. Dephosphorylated by protein phosphatase 2A (PP2A). Present in macrophages derived from peripheral blood monocytes. Also present in atheromata (at protein level).

The protein localises to the mitochondrion. It localises to the cytoplasm. Its pathway is protein modification; protein ubiquitination. In terms of biological role, substrate-recognition component of a Cul2-RING (CRL2) E3 ubiquitin-protein ligase complex of the DesCEND (destruction via C-end degrons) pathway, which recognizes a C-degron located at the extreme C terminus of target proteins, leading to their ubiquitination and degradation. The C-degron recognized by the DesCEND pathway is usually a motif of less than ten residues and can be present in full-length proteins, truncated proteins or proteolytically cleaved forms. The CRL2(FEM1A) complex specifically recognizes proteins with an arginine at the C-terminus: recognizes and binds proteins ending with -Lys/Arg-Xaa-Arg and -Lys/Arg-Xaa-Xaa-Arg C-degrons, such as SIL1 or OR51B2, leading to their ubiquitination and degradation. Promotes ubiquitination and degradation of SLBP. Involved in PGE2-EP4-mediated inhibition of inflammation of macrophages via interaction with NFKB1 and PTGER4. Promotes inflammation in brain microglia through MAP2K4/MKK4-mediated signaling. This Homo sapiens (Human) protein is Protein fem-1 homolog A.